The following is a 223-amino-acid chain: Urease accessory protein UreF (223 aa).

The protein belongs to the UreF family. In terms of assembly, ureD, UreF and UreG form a complex that acts as a GTP-hydrolysis-dependent molecular chaperone, activating the urease apoprotein by helping to assemble the nickel containing metallocenter of UreC. The UreE protein probably delivers the nickel.

It is found in the cytoplasm. Required for maturation of urease via the functional incorporation of the urease nickel metallocenter. In Agrobacterium fabrum (strain C58 / ATCC 33970) (Agrobacterium tumefaciens (strain C58)), this protein is Urease accessory protein UreF.